We begin with the raw amino-acid sequence, 400 residues long: tRNA-specific 2-thiouridylase MnmA (400 aa).

ATP contacts are provided by residues 19–26 (AMSGGVDS) and L45. Catalysis depends on C113, which acts as the Nucleophile. The cysteines at positions 113 and 210 are disulfide-linked. Residue G137 coordinates ATP. The segment at 160 to 162 (RDQ) is interaction with tRNA. C210 acts as the Cysteine persulfide intermediate in catalysis.

Belongs to the MnmA/TRMU family.

The protein localises to the cytoplasm. The enzyme catalyses S-sulfanyl-L-cysteinyl-[protein] + uridine(34) in tRNA + AH2 + ATP = 2-thiouridine(34) in tRNA + L-cysteinyl-[protein] + A + AMP + diphosphate + H(+). Catalyzes the 2-thiolation of uridine at the wobble position (U34) of tRNA, leading to the formation of s(2)U34. The protein is tRNA-specific 2-thiouridylase MnmA of Nitrobacter hamburgensis (strain DSM 10229 / NCIMB 13809 / X14).